The sequence spans 89 residues: MSLSTEKKAAIVAEFGRDAKDTGSSEVQIALLTAQINHLQTHFAEHKKDHHGRRGLLRMVSRRRKLLDYLKRTDLALYQSTIARLGLRR.

This sequence belongs to the universal ribosomal protein uS15 family. As to quaternary structure, part of the 30S ribosomal subunit. Forms a bridge to the 50S subunit in the 70S ribosome, contacting the 23S rRNA.

Functionally, one of the primary rRNA binding proteins, it binds directly to 16S rRNA where it helps nucleate assembly of the platform of the 30S subunit by binding and bridging several RNA helices of the 16S rRNA. Its function is as follows. Forms an intersubunit bridge (bridge B4) with the 23S rRNA of the 50S subunit in the ribosome. The polypeptide is Small ribosomal subunit protein uS15 (Haemophilus influenzae (strain PittGG)).